Here is a 248-residue protein sequence, read N- to C-terminus: 1-(5-phosphoribosyl)-5-[(5-phosphoribosylamino)methylideneamino] imidazole-4-carboxamide isomerase (248 aa).

The active-site Proton acceptor is D7. Catalysis depends on D129, which acts as the Proton donor.

The protein belongs to the HisA/HisF family.

It localises to the cytoplasm. The enzyme catalyses 1-(5-phospho-beta-D-ribosyl)-5-[(5-phospho-beta-D-ribosylamino)methylideneamino]imidazole-4-carboxamide = 5-[(5-phospho-1-deoxy-D-ribulos-1-ylimino)methylamino]-1-(5-phospho-beta-D-ribosyl)imidazole-4-carboxamide. It participates in amino-acid biosynthesis; L-histidine biosynthesis; L-histidine from 5-phospho-alpha-D-ribose 1-diphosphate: step 4/9. This Aeromonas salmonicida (strain A449) protein is 1-(5-phosphoribosyl)-5-[(5-phosphoribosylamino)methylideneamino] imidazole-4-carboxamide isomerase.